We begin with the raw amino-acid sequence, 556 residues long: Dihydroxy-acid dehydratase (556 aa).

C47 contributes to the [2Fe-2S] cluster binding site. Mg(2+) is bound at residue D79. Residue C120 coordinates [2Fe-2S] cluster. D121 and K122 together coordinate Mg(2+). K122 is subject to N6-carboxylysine. A [2Fe-2S] cluster-binding site is contributed by C192. Mg(2+) is bound at residue E444. Residue S470 is the Proton acceptor of the active site.

This sequence belongs to the IlvD/Edd family. Homodimer. Requires [2Fe-2S] cluster as cofactor. Mg(2+) serves as cofactor.

It catalyses the reaction (2R)-2,3-dihydroxy-3-methylbutanoate = 3-methyl-2-oxobutanoate + H2O. The enzyme catalyses (2R,3R)-2,3-dihydroxy-3-methylpentanoate = (S)-3-methyl-2-oxopentanoate + H2O. It participates in amino-acid biosynthesis; L-isoleucine biosynthesis; L-isoleucine from 2-oxobutanoate: step 3/4. It functions in the pathway amino-acid biosynthesis; L-valine biosynthesis; L-valine from pyruvate: step 3/4. Functionally, functions in the biosynthesis of branched-chain amino acids. Catalyzes the dehydration of (2R,3R)-2,3-dihydroxy-3-methylpentanoate (2,3-dihydroxy-3-methylvalerate) into 2-oxo-3-methylpentanoate (2-oxo-3-methylvalerate) and of (2R)-2,3-dihydroxy-3-methylbutanoate (2,3-dihydroxyisovalerate) into 2-oxo-3-methylbutanoate (2-oxoisovalerate), the penultimate precursor to L-isoleucine and L-valine, respectively. In Prochlorococcus marinus (strain NATL2A), this protein is Dihydroxy-acid dehydratase.